The following is a 438-amino-acid chain: V-type ATP synthase beta chain (438 aa).

It belongs to the ATPase alpha/beta chains family.

In terms of biological role, produces ATP from ADP in the presence of a proton gradient across the membrane. The V-type beta chain is a regulatory subunit. This Chlamydia trachomatis serovar A (strain ATCC VR-571B / DSM 19440 / HAR-13) protein is V-type ATP synthase beta chain.